Consider the following 196-residue polypeptide: Holliday junction branch migration complex subunit RuvA (196 aa).

Positions 1-63 are domain I; sequence MYDYIKGTLV…DDAHLLFGFH (63 aa). The tract at residues 64 to 142 is domain II; it reads TEDEKEVFLK…ELPAETTNTT (79 aa). Residues 143–146 are flexible linker; it reads ANQT. The tract at residues 147-196 is domain III; the sequence is AGNQQLDEAMEALLALGYKSTELKKVKAFFEDTNETAEQYIKSALKMLMK.

This sequence belongs to the RuvA family. Homotetramer. Forms an RuvA(8)-RuvB(12)-Holliday junction (HJ) complex. HJ DNA is sandwiched between 2 RuvA tetramers; dsDNA enters through RuvA and exits via RuvB. An RuvB hexamer assembles on each DNA strand where it exits the tetramer. Each RuvB hexamer is contacted by two RuvA subunits (via domain III) on 2 adjacent RuvB subunits; this complex drives branch migration. In the full resolvosome a probable DNA-RuvA(4)-RuvB(12)-RuvC(2) complex forms which resolves the HJ.

It is found in the cytoplasm. Functionally, the RuvA-RuvB-RuvC complex processes Holliday junction (HJ) DNA during genetic recombination and DNA repair, while the RuvA-RuvB complex plays an important role in the rescue of blocked DNA replication forks via replication fork reversal (RFR). RuvA specifically binds to HJ cruciform DNA, conferring on it an open structure. The RuvB hexamer acts as an ATP-dependent pump, pulling dsDNA into and through the RuvAB complex. HJ branch migration allows RuvC to scan DNA until it finds its consensus sequence, where it cleaves and resolves the cruciform DNA. This is Holliday junction branch migration complex subunit RuvA from Streptococcus thermophilus (strain CNRZ 1066).